A 382-amino-acid chain; its full sequence is Transcription factor MYB104 (382 aa).

HTH myb-type domains are found at residues 13 to 69 and 70 to 120; these read KKTF…KPSL and KKGP…MRLK. 2 consecutive DNA-binding regions (H-T-H motif) follow at residues 41 to 65 and 93 to 116; these read WTHV…MNHL and WSQM…NARR. Residues 326–364 form a disordered region; it reads IPKTDTSSESQLFQSSLRSHTDATPDIANTTGYVGSNER. Polar residues-rich tracts occupy residues 329-343 and 352-364; these read TDTS…SSLR and IANT…SNER.

The protein resides in the nucleus. In Arabidopsis thaliana (Mouse-ear cress), this protein is Transcription factor MYB104 (MYB104).